Reading from the N-terminus, the 383-residue chain is Cobalt-precorrin-5B C(1)-methyltransferase (383 aa).

The protein belongs to the CbiD family.

The enzyme catalyses Co-precorrin-5B + S-adenosyl-L-methionine = Co-precorrin-6A + S-adenosyl-L-homocysteine. Its pathway is cofactor biosynthesis; adenosylcobalamin biosynthesis; cob(II)yrinate a,c-diamide from sirohydrochlorin (anaerobic route): step 6/10. Its function is as follows. Catalyzes the methylation of C-1 in cobalt-precorrin-5B to form cobalt-precorrin-6A. The chain is Cobalt-precorrin-5B C(1)-methyltransferase from Prochlorococcus marinus (strain MIT 9313).